Consider the following 262-residue polypeptide: Plant intracellular Ras-group-related LRR protein 7 (262 aa).

LRR repeat units follow at residues 19-42 (WRSTGIVALRDARLKVVPNEVLQV), 43-66 (GNSLRILDLTNNKIAEIPQEVGTL), 68-89 (NMQRLVLAGNLVESIPANIGYL), 90-112 (RNLKILTLDRNKISVLPEELGSL), 113-135 (SNLQQLSISQNSLSRLPKSVGDL), 137-158 (NMLLLNVSDNKLIALPESIGGC), 159-181 (SSLEELQANGNSIEDVPSSICNL), 182-204 (VCLKSLSLNGNKIRQLPQNLLKD), and 206-231 (KALQNISLHDNPISMDQFQQMDGFTE).

The protein belongs to the SHOC2 family. In terms of tissue distribution, widely expressed and preferentially in leaf sheathes.

In terms of biological role, leucine-rich repeat protein that likely mediates protein interactions, possibly in the context of signal transduction. This chain is Plant intracellular Ras-group-related LRR protein 7 (IRL7), found in Oryza sativa subsp. japonica (Rice).